Here is a 182-residue protein sequence, read N- to C-terminus: MNVIFLPQGDWLGLSFRLLLAMLVGAVIGLNRQRGGRPAGMRTFTLVAMGSALFVMVPIQAEGDSSFAAINALSRTVQGVAAGVGFLGAGLILQRAPKTKRSGRPRVSGLTTAATIWITAALGAVIGCGLWQLGLIGTFFTLLTLSGFKRLQRIAWLRQSWERLIAWEAKTLPPDAEEEDDD.

Helical transmembrane passes span 11–31 (WLGL…IGLN), 43–63 (TFTL…QAEG), 73–93 (LSRT…GLIL), and 116–136 (IWIT…LGLI).

Belongs to the MgtC/SapB family.

Its subcellular location is the cell membrane. The protein is Protein SrpB (srpB) of Synechococcus elongatus (strain ATCC 33912 / PCC 7942 / FACHB-805) (Anacystis nidulans R2).